Reading from the N-terminus, the 646-residue chain is Interferon-induced GTP-binding protein MxA (646 aa).

The Dynamin-type G domain maps to 34-307; sequence DLALPAIAVI…LVHHIQKSLP (274 aa). A G1 motif region spans residues 44–51; the sequence is GDQSSGKS. 44 to 51 lines the GTP pocket; the sequence is GDQSSGKS. The interval 69–71 is G2 motif; the sequence is VTR. Residues 145 to 148 are G3 motif; it reads DLPG. GTP is bound by residues 145 to 149 and 214 to 217; these read DLPGI and TKPD. Positions 214–217 are G4 motif; the sequence is TKPD. Residues 246–249 are G5 motif; sequence RCRG. In terms of domain architecture, GED spans 546–637; sequence LREMRLHLKS…PLGHLLEVTF (92 aa).

The protein belongs to the TRAFAC class dynamin-like GTPase superfamily. Dynamin/Fzo/YdjA family.

Its subcellular location is the cytoplasm. This chain is Interferon-induced GTP-binding protein MxA (mxa), found in Danio rerio (Zebrafish).